The primary structure comprises 107 residues: UPF0473 protein LACR_0139 (107 aa).

This sequence belongs to the UPF0473 family.

This Lactococcus lactis subsp. cremoris (strain SK11) protein is UPF0473 protein LACR_0139.